Consider the following 492-residue polypeptide: Cytochrome P450 2A12 (492 aa).

C437 serves as a coordination point for heme.

The protein belongs to the cytochrome P450 family. The cofactor is heme. In terms of tissue distribution, liver.

The protein localises to the endoplasmic reticulum membrane. It is found in the microsome membrane. It catalyses the reaction an organic molecule + reduced [NADPH--hemoprotein reductase] + O2 = an alcohol + oxidized [NADPH--hemoprotein reductase] + H2O + H(+). In terms of biological role, highly active in the 7-alpha-hydroxylation of testosterone. This is Cytochrome P450 2A12 (Cyp2a12) from Mus musculus (Mouse).